The primary structure comprises 467 residues: AT-rich interactive domain-containing protein cfi-1 (467 aa).

The interval 1 to 56 is disordered; the sequence is MSVRIDEPQLFVSMSKEPTQETVNVGGHHDDSSSNCDERVDDQTEEQKSPPASPDL. A compositionally biased stretch (basic and acidic residues) spans 27–48; the sequence is GHHDDSSSNCDERVDDQTEEQK. Positions 181–273 constitute an ARID domain; sequence DVKRKEWLDD…YLYDYECEKE (93 aa). The region spanning 356-464 is the REKLES domain; sequence AILEAHQRNL…GVLFALDETV (109 aa). Positions 383-441 are disordered; it reads LTACSNGNGGNIHNSGRESTSSNDSDIPAKRPKLENDVKTNGASSMRISTKHSDNSKTS. The span at 409–420 shows a compositional bias: basic and acidic residues; sequence IPAKRPKLENDV. Over residues 421–430 the composition is skewed to polar residues; it reads KTNGASSMRI.

Present in IL2 and URA neurons, and in AVD and PVC interneurons. Present in muscles from head and pharynx (at protein level).

The protein localises to the nucleus. Transcription factor. Regulates neuronal subtype identity. Involved in motor neuron fate determination and maintenance, acting as a transcriptional repressor to counteract gene activation by transcription factor unc-3 in a subset of motor neurons. Probably acts by binding to specific promoter elements. Promotes differentiation of URA sensory neurons and prevents them from expressing male-specific CEM neuronal features. Promotes differentiation of AVD and PVC interneurons and their glutamate receptor expression. The polypeptide is AT-rich interactive domain-containing protein cfi-1 (cfi-1) (Caenorhabditis elegans).